The primary structure comprises 207 residues: Ankyrin repeat-containing protein P1E11.10 (207 aa).

2 ANK repeats span residues 36 to 65 and 69 to 98; these read NGYT…DINI and DGET…TVKN.

It localises to the cytoplasm. The protein localises to the nucleus. In Schizosaccharomyces pombe (strain 972 / ATCC 24843) (Fission yeast), this protein is Ankyrin repeat-containing protein P1E11.10.